Here is a 201-residue protein sequence, read N- to C-terminus: Recombination protein RecR (201 aa).

Residues 57-72 (CADCRTFTEQEKCNIC) form a C4-type zinc finger. One can recognise a Toprim domain in the interval 81-176 (GQICVVESPA…DASRIAHGVP (96 aa)).

The protein belongs to the RecR family.

May play a role in DNA repair. It seems to be involved in an RecBC-independent recombinational process of DNA repair. It may act with RecF and RecO. This chain is Recombination protein RecR, found in Cronobacter sakazakii (strain ATCC BAA-894) (Enterobacter sakazakii).